The primary structure comprises 866 residues: Translation initiation factor IF-2 (866 aa).

Disordered regions lie at residues 1 to 63 (MTND…AAVQ) and 92 to 257 (VVRA…RGRS). Over residues 26–36 (ETGQVRQSFSH) the composition is skewed to polar residues. Residues 92–135 (VVRAAEEAERKRLEEIERRRREEEEARLKVEEEARRKAEEEAAR) show a composition bias toward basic and acidic residues. 2 stretches are compositionally biased toward low complexity: residues 152–164 (VAPA…AAPQ) and 179–197 (PDAS…TEAP). The 169-residue stretch at 365–533 (SRPPVVTVMG…AILLQSEILD (169 aa)) folds into the tr-type G domain. Residues 374-381 (GHVDHGKT) are G1. 374-381 (GHVDHGKT) is a GTP binding site. Residues 399 to 403 (GITQH) are G2. Residues 421-424 (DTPG) form a G3 region. Residues 421-425 (DTPGH) and 475-478 (NKMD) each bind GTP. The interval 475 to 478 (NKMD) is G4. The interval 511 to 513 (SAK) is G5.

The protein belongs to the TRAFAC class translation factor GTPase superfamily. Classic translation factor GTPase family. IF-2 subfamily.

Its subcellular location is the cytoplasm. Functionally, one of the essential components for the initiation of protein synthesis. Protects formylmethionyl-tRNA from spontaneous hydrolysis and promotes its binding to the 30S ribosomal subunits. Also involved in the hydrolysis of GTP during the formation of the 70S ribosomal complex. The chain is Translation initiation factor IF-2 from Rhodospirillum rubrum (strain ATCC 11170 / ATH 1.1.1 / DSM 467 / LMG 4362 / NCIMB 8255 / S1).